Reading from the N-terminus, the 417-residue chain is Adenosylhomocysteinase (417 aa).

Residues threonine 53, aspartate 125, and glutamate 149 each coordinate substrate. 150–152 (TTT) is a binding site for NAD(+). Substrate-binding residues include lysine 179 and aspartate 183. NAD(+) contacts are provided by residues asparagine 184, 213–218 (GYGWVG), glutamate 236, asparagine 271, 292–294 (AGH), and asparagine 339.

The protein belongs to the adenosylhomocysteinase family. It depends on NAD(+) as a cofactor.

Its subcellular location is the cytoplasm. The enzyme catalyses S-adenosyl-L-homocysteine + H2O = L-homocysteine + adenosine. It participates in amino-acid biosynthesis; L-homocysteine biosynthesis; L-homocysteine from S-adenosyl-L-homocysteine: step 1/1. Functionally, may play a key role in the regulation of the intracellular concentration of adenosylhomocysteine. In Saccharolobus solfataricus (strain ATCC 35092 / DSM 1617 / JCM 11322 / P2) (Sulfolobus solfataricus), this protein is Adenosylhomocysteinase.